Consider the following 338-residue polypeptide: Lipoate-protein ligase A (338 aa).

The BPL/LPL catalytic domain occupies 29-216 (PATQRVLFLW…AFFAHYGERV (188 aa)). Residues Arg-71, 76 to 79 (GAVF), and Lys-134 contribute to the ATP site. Lys-134 contacts (R)-lipoate.

The protein belongs to the LplA family. In terms of assembly, monomer.

It is found in the cytoplasm. It carries out the reaction L-lysyl-[lipoyl-carrier protein] + (R)-lipoate + ATP = N(6)-[(R)-lipoyl]-L-lysyl-[lipoyl-carrier protein] + AMP + diphosphate + H(+). Its pathway is protein modification; protein lipoylation via exogenous pathway; protein N(6)-(lipoyl)lysine from lipoate: step 1/2. It participates in protein modification; protein lipoylation via exogenous pathway; protein N(6)-(lipoyl)lysine from lipoate: step 2/2. Functionally, catalyzes both the ATP-dependent activation of exogenously supplied lipoate to lipoyl-AMP and the transfer of the activated lipoyl onto the lipoyl domains of lipoate-dependent enzymes. This is Lipoate-protein ligase A from Salmonella paratyphi B (strain ATCC BAA-1250 / SPB7).